Consider the following 108-residue polypeptide: Immunoglobulin kappa variable 11-125 (108 aa).

The tract at residues 1-23 (DVQMIQSPSSLSASLGDIVTMTC) is framework-1. Cysteine 23 and cysteine 88 form a disulfide bridge. The complementarity-determining-1 stretch occupies residues 24 to 34 (QASQGTSINLN). Positions 35–49 (WFQQKPGKAPKLLIY) are framework-2. A complementarity-determining-2 region spans residues 50-56 (GASILED). The interval 57–88 (GVPSRFSGSRYGTDFTLTISSLEDEDMATYFC) is framework-3. Positions 89–97 (LQHSYLPYT) are complementarity-determining-3. Positions 98 to 108 (FGGGTKLEIKR) are framework-4.

The sequence is that of Immunoglobulin kappa variable 11-125 from Mus musculus (Mouse).